Here is a 185-residue protein sequence, read N- to C-terminus: A-type ATP synthase subunit E (185 aa).

The protein belongs to the V-ATPase E subunit family. As to quaternary structure, has multiple subunits with at least A(3), B(3), C, D, E, F, H, I and proteolipid K(x).

The protein resides in the cell membrane. In terms of biological role, component of the A-type ATP synthase that produces ATP from ADP in the presence of a proton gradient across the membrane. The protein is A-type ATP synthase subunit E of Thermoplasma volcanium (strain ATCC 51530 / DSM 4299 / JCM 9571 / NBRC 15438 / GSS1).